Consider the following 234-residue polypeptide: 2,3,4,5-tetrahydropyridine-2,6-dicarboxylate N-acetyltransferase (234 aa).

It belongs to the transferase hexapeptide repeat family. DapH subfamily.

The catalysed reaction is (S)-2,3,4,5-tetrahydrodipicolinate + acetyl-CoA + H2O = L-2-acetamido-6-oxoheptanedioate + CoA. Its pathway is amino-acid biosynthesis; L-lysine biosynthesis via DAP pathway; LL-2,6-diaminopimelate from (S)-tetrahydrodipicolinate (acetylase route): step 1/3. Catalyzes the transfer of an acetyl group from acetyl-CoA to tetrahydrodipicolinate. The chain is 2,3,4,5-tetrahydropyridine-2,6-dicarboxylate N-acetyltransferase from Leuconostoc citreum (strain KM20).